The chain runs to 159 residues: Nucleotide-binding protein PSPA7_4966 (159 aa).

This sequence belongs to the YajQ family.

In terms of biological role, nucleotide-binding protein. The chain is Nucleotide-binding protein PSPA7_4966 from Pseudomonas paraeruginosa (strain DSM 24068 / PA7) (Pseudomonas aeruginosa (strain PA7)).